The sequence spans 165 residues: Large ribosomal subunit protein uL15 (165 aa).

The span at 1 to 30 (MTNKKRRQRGSRTHGGGTHKNRRGAGHRGG) shows a compositional bias: basic residues. 2 disordered regions span residues 1 to 39 (MTNK…RAKH) and 137 to 165 (AGGE…DDEA). Residues 150 to 165 (AADESENTSDDEDDEA) show a composition bias toward acidic residues.

Belongs to the universal ribosomal protein uL15 family. In terms of assembly, part of the 50S ribosomal subunit.

Its function is as follows. Binds to the 23S rRNA. In Halorubrum lacusprofundi (strain ATCC 49239 / DSM 5036 / JCM 8891 / ACAM 34), this protein is Large ribosomal subunit protein uL15.